Reading from the N-terminus, the 212-residue chain is Interleukin-6 (212 aa).

Positions 1–27 (MNSVSTSAFGPVAFSLGLLLVLPAAFP) are cleaved as a signal peptide. A disulfide bridge connects residues C72 and C78. Residue N73 is glycosylated (N-linked (GlcNAc...) asparagine). At S81 the chain carries Phosphoserine. Residues C101 and C111 are joined by a disulfide bond. N-linked (GlcNAc...) asparagine glycosylation occurs at N172.

The protein belongs to the IL-6 superfamily. As to quaternary structure, component of a hexamer of two molecules each of IL6, IL6R and IL6ST; first binds to IL6R to associate with the signaling subunit IL6ST. Interacts with IL6R (via the N-terminal ectodomain); this interaction may be affected by IL6R-binding with SORL1, hence decreasing IL6 cis signaling. Interacts with SORL1 (via the N-terminal ectodomain); this interaction leads to IL6 internalization and lysosomal degradation. May form a trimeric complex with the soluble SORL1 ectodomain and soluble IL6R receptor; this interaction might stabilize circulating IL6, hence promoting IL6 trans signaling.

Its subcellular location is the secreted. Cytokine with a wide variety of biological functions in immunity, tissue regeneration, and metabolism. Binds to IL6R, then the complex associates to the signaling subunit IL6ST/gp130 to trigger the intracellular IL6-signaling pathway. The interaction with the membrane-bound IL6R and IL6ST stimulates 'classic signaling', whereas the binding of IL6 and soluble IL6R to IL6ST stimulates 'trans-signaling'. Alternatively, 'cluster signaling' occurs when membrane-bound IL6:IL6R complexes on transmitter cells activate IL6ST receptors on neighboring receiver cells. In terms of biological role, IL6 is a potent inducer of the acute phase response. Rapid production of IL6 contributes to host defense during infection and tissue injury, but excessive IL6 synthesis is involved in disease pathology. In the innate immune response, is synthesized by myeloid cells, such as macrophages and dendritic cells, upon recognition of pathogens through toll-like receptors (TLRs) at the site of infection or tissue injury. In the adaptive immune response, is required for the differentiation of B cells into immunoglobulin-secreting cells. Plays a major role in the differentiation of CD4(+) T cell subsets. Essential factor for the development of T follicular helper (Tfh) cells that are required for the induction of germinal-center formation. Required to drive naive CD4(+) T cells to the Th17 lineage. Also required for proliferation of myeloma cells and the survival of plasmablast cells. Its function is as follows. Acts as an essential factor in bone homeostasis and on vessels directly or indirectly by induction of VEGF, resulting in increased angiogenesis activity and vascular permeability. Induces, through 'trans-signaling' and synergistically with IL1B and TNF, the production of VEGF. Involved in metabolic controls, is discharged into the bloodstream after muscle contraction increasing lipolysis and improving insulin resistance. 'Trans-signaling' in central nervous system also regulates energy and glucose homeostasis. Mediates, through GLP-1, crosstalk between insulin-sensitive tissues, intestinal L cells and pancreatic islets to adapt to changes in insulin demand. Also acts as a myokine. Plays a protective role during liver injury, being required for maintenance of tissue regeneration. Also has a pivotal role in iron metabolism by regulating HAMP/hepcidin expression upon inflammation or bacterial infection. Through activation of IL6ST-YAP-NOTCH pathway, induces inflammation-induced epithelial regeneration. The chain is Interleukin-6 (IL6) from Macaca thibetana (Pere David's macaque).